Consider the following 1171-residue polypeptide: MEIVNNQNQCVPYNCLNNPENEILDIERSNSTVATNIALEISRLLASATPIGGILLGLFDAIWGSIGPSQWDLFLEQIELLIDQKIEEFARNQAISRLEGISSLYGIYTEAFREWEADPTNPALKEEMRTQFNDMNSILVTAIPLFSVQNYQVPFLSVYVQAANLHLSVLRDVSVFGQAWGFDIATINSRYNDLTRLIPIYTDYAVRWYNTGLDRLPRTGGLRNWARFNQFRRELTISVLDIISFFRNYDSRLYPIPTSSQLTREVYTDPVINITDYRVGPSFENIENSAIRSPHLMDFLNNLTIDTDLIRGVHYWAGHRVTSHFTGSSQVITTPQYGITANAEPRRTIAPSTFPGLNLFYRTLSNPFFRRSENITPTLGINVVQGVGFIQPNNAEVLYRSRGTVDSLNELPIDGENSLVGYSHRLSHVTLTRSLYNTNITSLPTFVWTHHSATNTNTINPDIITQIPLVKGFRLGGGTSVIKGPGFTGGDILRRNTIGEFVSLQVNINSPITQRYRLRFRYASSRDARITVAIGGQIRVDMTLEKTMEIGESLTSRTFSYTNFSNPFSFRANPDIIRIAEELPIRGGELYIDKIELILADATFEEEYDLERAQKAVNALFTSTNQLGLKTDVTDYHIDQVSNLVECLSDEFCLDEKRELSEKVKHAKRLSDERNLLQDPNFRGINRQPDRGWRGSTDITIQGGDDVFKENYVTLPGTFDECYPTYLYQKIDESKLKAYTRYELRGYIEDSQDLEIYLIRYNAKHETVNVPGTGSLWPLSAQSPIGKCGEPNRCAPHLEWNPNLDCSCRDGEKCAHHSHHFSLDIDVGCTDLNEDLGVWVIFKIKTQDGYARLGNLEFLEENPLLGEALARVKRAEKKWRDKCEKLEWETNIVYKEAKESVDALFVNSQYDRLQADTNIAMIHAADKRVHSIREAYLPELSVIPGVNAAIFEELEGRIFTAFSLYDARNVIKNGDFNNGLSCWNVKGHVDVEEQNNHRSVLVVPEWEAEVSQEVRVCPGRGYILRVTAYKEGYGEGCVTIHEIEDNTDELKFSNCVEEEVYPNNTVTCNNYTATQEEHEGTYTSRNRGYDEAYESNSSVHASVYEEKSYTDRRRENPCESNRGYGDYTPLPAGYVTKELEYFPETDKVWIEIGETEGTFIVDSVELLLMEE.

The disordered stretch occupies residues 1094 to 1124 (ESNSSVHASVYEEKSYTDRRRENPCESNRGY). Positions 1103–1117 (VYEEKSYTDRRRENP) are enriched in basic and acidic residues.

This sequence belongs to the delta endotoxin family.

Functionally, promotes colloidosmotic lysis by binding to the midgut epithelial cells of many lepidopteran larvae including Spodoptera species. This chain is Pesticidal crystal protein Cry1Ea (cry1Ea), found in Bacillus thuringiensis subsp. kenyae.